A 21-amino-acid polypeptide reads, in one-letter code: Hemocyanin subunit 4 (21 aa).

The protein belongs to the tyrosinase family. Hemocyanin subfamily. Hemolymph.

The protein localises to the secreted. It is found in the extracellular space. In terms of biological role, hemocyanins are copper-containing oxygen carriers occurring freely dissolved in the hemolymph of many mollusks and arthropods. The chain is Hemocyanin subunit 4 from Maja squinado (Mediterranean spider crab).